The primary structure comprises 244 residues: tRNA pseudouridine synthase A (244 aa).

D52 functions as the Nucleophile in the catalytic mechanism. Substrate is bound at residue Y110.

The protein belongs to the tRNA pseudouridine synthase TruA family. As to quaternary structure, homodimer.

It catalyses the reaction uridine(38/39/40) in tRNA = pseudouridine(38/39/40) in tRNA. Functionally, formation of pseudouridine at positions 38, 39 and 40 in the anticodon stem and loop of transfer RNAs. This is tRNA pseudouridine synthase A from Clostridium botulinum (strain Alaska E43 / Type E3).